Here is a 154-residue protein sequence, read N- to C-terminus: Superoxide dismutase [Cu-Zn] 1 (154 aa).

His-47, His-49, and His-64 together coordinate Cu cation. A disulfide bond links Cys-58 and Cys-147. Residues His-64, His-72, His-81, and Asp-84 each coordinate Zn(2+). Cu cation is bound at residue His-121. Arg-144 contacts substrate.

It belongs to the Cu-Zn superoxide dismutase family. Homodimer. It depends on Cu cation as a cofactor. The cofactor is Zn(2+).

Its subcellular location is the cytoplasm. It carries out the reaction 2 superoxide + 2 H(+) = H2O2 + O2. Destroys radicals which are normally produced within the cells and which are toxic to biological systems. This Debaryomyces hansenii (strain ATCC 36239 / CBS 767 / BCRC 21394 / JCM 1990 / NBRC 0083 / IGC 2968) (Yeast) protein is Superoxide dismutase [Cu-Zn] 1 (SOD1).